The chain runs to 501 residues: Ribose import ATP-binding protein RbsA (501 aa).

ABC transporter domains are found at residues 5-241 (LSLE…VGRK) and 252-498 (LRND…TGGV). 37–44 (GENGAGKS) serves as a coordination point for ATP.

This sequence belongs to the ABC transporter superfamily. Ribose importer (TC 3.A.1.2.1) family. In terms of assembly, the complex is composed of an ATP-binding protein (RbsA), two transmembrane proteins (RbsC) and a solute-binding protein (RbsB).

The protein resides in the cell inner membrane. It carries out the reaction D-ribose(out) + ATP + H2O = D-ribose(in) + ADP + phosphate + H(+). Its function is as follows. Part of the ABC transporter complex RbsABC involved in ribose import. Responsible for energy coupling to the transport system. The sequence is that of Ribose import ATP-binding protein RbsA from Hahella chejuensis (strain KCTC 2396).